The chain runs to 135 residues: Protein PsiE homolog (135 aa).

A run of 4 helical transmembrane segments spans residues 20–40 (VGLI…TIHL), 54–74 (YMLI…ALIV), 82–102 (HFPL…LIIV), and 107–127 (PIDT…LYLA).

This sequence belongs to the PsiE family.

It is found in the cell inner membrane. This chain is Protein PsiE homolog, found in Yersinia pseudotuberculosis serotype IB (strain PB1/+).